The sequence spans 44 residues: Defensin-like protein 1 (44 aa).

Glutamine 1 is subject to Pyrrolidone carboxylic acid. An intrachain disulfide couples cysteine 15 to cysteine 36.

Belongs to the DEFL family. Forms oligomers in its native state.

It localises to the secreted. Its function is as follows. Possesses antifungal activity sensitive to inorganic cations. This is Defensin-like protein 1 (AFP1) from Brassica napus (Rape).